We begin with the raw amino-acid sequence, 396 residues long: Elongation factor Tu (396 aa).

Residues 10-205 (KEHVNIGTIG…AVDNYIETPV (196 aa)) enclose the tr-type G domain. Residues 19–26 (GHVDHGKT) form a G1 region. Position 19–26 (19–26 (GHVDHGKT)) interacts with GTP. Threonine 26 contributes to the Mg(2+) binding site. A G2 region spans residues 60–64 (GITIN). The G3 stretch occupies residues 81 to 84 (DCPG). GTP is bound by residues 81–85 (DCPGH) and 136–139 (NKVD). A G4 region spans residues 136–139 (NKVD). Residues 175 to 177 (SAL) form a G5 region.

This sequence belongs to the TRAFAC class translation factor GTPase superfamily. Classic translation factor GTPase family. EF-Tu/EF-1A subfamily. In terms of assembly, monomer.

It is found in the cytoplasm. The catalysed reaction is GTP + H2O = GDP + phosphate + H(+). Functionally, GTP hydrolase that promotes the GTP-dependent binding of aminoacyl-tRNA to the A-site of ribosomes during protein biosynthesis. This chain is Elongation factor Tu, found in Mycoplasmopsis pulmonis (strain UAB CTIP) (Mycoplasma pulmonis).